A 333-amino-acid polypeptide reads, in one-letter code: MDQLPAAELTNFISPSGPESRPVFHSICGIHDTANVQQKQTLDQNKVISAPLDYLLSFPGKDIRGQLISSFNEWLQIPEEKLSLIKRVVELLHTASLLIDDIQDSSQLRRGLPVAHNIFGVAQTINSANYAYFKAQSELHKIGDPRAVEIFTEELLRLHKGQGMDLYWRDSLTCPTEEEYLEMVSNKTGGLFRLAIKLMQLCSASEKDCVPLVEYLGIIFQIRDDYQNLQSEKYIENKGFGEDLTEGKFSFPIIHSIRSNSDSFQLINILKQKSEDTTVKLYAIKLLESTGSFEFCRQRIAQLTTQARSLLMEMGDPSQTAGIQGILAFLELK.

Isopentenyl diphosphate contacts are provided by lysine 61, arginine 64, and histidine 93. Mg(2+) contacts are provided by aspartate 100 and aspartate 104. Arginine 109 is a binding site for dimethylallyl diphosphate. Arginine 110 lines the isopentenyl diphosphate pocket. Dimethylallyl diphosphate-binding residues include lysine 187, threonine 188, and glutamine 221. Aspartate 224 is a Mg(2+) binding site. Residues asparagine 228, lysine 238, and lysine 248 each contribute to the dimethylallyl diphosphate site.

Belongs to the FPP/GGPP synthase family. Mg(2+) is required as a cofactor.

The enzyme catalyses isopentenyl diphosphate + dimethylallyl diphosphate = (2E)-geranyl diphosphate + diphosphate. It carries out the reaction isopentenyl diphosphate + (2E)-geranyl diphosphate = (2E,6E)-farnesyl diphosphate + diphosphate. The catalysed reaction is isopentenyl diphosphate + (2E,6E)-farnesyl diphosphate = (2E,6E,10E)-geranylgeranyl diphosphate + diphosphate. It participates in secondary metabolite biosynthesis; terpenoid biosynthesis. Its function is as follows. Geranylgeranyl pyrophosphate synthase; part of the gene cluster that mediates the biosynthesis of 15-deoxyoxalicine B. The first step of the pathway is the synthesis of nicotinyl-CoA from nicotinic acid by the nicotinic acid-CoA ligase olcI. Nicotinyl-CoA is then a substrate of polyketide synthase olcA to produce 4-hydroxy-6-(3-pyridinyl)-2H-pyran-2-one (HPPO) which is further prenylated by the polyprenyl transferase olcH to yield geranylgeranyl-HPPO. Geranylgeranyl pyrophosphate is provided by the cluster-specific geranylgeranyl pyrophosphate synthase olcC. The FAD-dependent monooxygenase olcE catalyzes the epoxidation of geranylgeranyl-HPPO and the terpene cyclase olcD catalyzes the cyclization of the terpenoid component, resulting in the formation of the tricyclic terpene moiety seen in predecaturin E. The cytochrome P450 monooxygenase then catalyzes the allylic oxidation of predecaturin E, which is followed by spirocylization with concomitant loss of one molecule of water to form decaturin E. Decaturin E is the substrate of the cytochrome P450 monooxygenase olcJ which hydroxylates it at the C-29 position to form decaturin F. The short-chain dehydrogenase/reductase olcF may catalyze the oxidation of decaturin F to generate the 29-hydroxyl-27-one intermediate, and subsequent hemiacetal formation probably leads to the formation of decaturin C. The dioxygenase olcK may be a peroxisomal enzyme that catalyzes the hydroxylation of decaturin C into decaturin A once decaturin C is shuttled into the peroxisome by the MFS transporter olcL. Finally the cytochrome P450 monooxygenase olcB catalyzes the oxidative rearrangement to yield 15-deoxyoxalicine B. In the absence of olcJ, decaturin E may be shunted to a pathway in which it is oxidized to a ketone, possibly by olcF, to form decaturin D, which undergoes further allylic oxidation to yield decaturin G. Moreover, in the absence of oclK or oclL, oclB can convert decaturin C into 15-deoxyoxalicine A. The sequence is that of Geranylgeranyl pyrophosphate synthase olcC from Penicillium canescens.